Reading from the N-terminus, the 199-residue chain is Probable thymidylate kinase (199 aa).

An ATP-binding site is contributed by Gly9 to Thr16.

The protein belongs to the thymidylate kinase family.

The enzyme catalyses dTMP + ATP = dTDP + ADP. This Methanococcus maripaludis (strain DSM 14266 / JCM 13030 / NBRC 101832 / S2 / LL) protein is Probable thymidylate kinase.